The primary structure comprises 355 residues: Uroporphyrinogen decarboxylase (355 aa).

Substrate-binding positions include 27–31 (RQAGR), aspartate 77, tyrosine 154, threonine 209, and histidine 327.

The protein belongs to the uroporphyrinogen decarboxylase family. Homodimer.

It localises to the cytoplasm. The enzyme catalyses uroporphyrinogen III + 4 H(+) = coproporphyrinogen III + 4 CO2. Its pathway is porphyrin-containing compound metabolism; protoporphyrin-IX biosynthesis; coproporphyrinogen-III from 5-aminolevulinate: step 4/4. Catalyzes the decarboxylation of four acetate groups of uroporphyrinogen-III to yield coproporphyrinogen-III. The chain is Uroporphyrinogen decarboxylase from Aeromonas salmonicida (strain A449).